The primary structure comprises 923 residues: Protocadherin gamma-B5 (923 aa).

The N-terminal stretch at M1–C30 is a signal peptide. 6 consecutive Cadherin domains span residues E31–F133, T134–F242, N243–V343, T344–F448, H449–V558, and D566–I671. The Extracellular segment spans residues E31 to Y687. N415 and N541 each carry an N-linked (GlcNAc...) asparagine glycan. Residues L688–A708 form a helical membrane-spanning segment. The Cytoplasmic segment spans residues L709–K923. 2 disordered regions span residues T794–N832 and A893–K923. Polar residues predominate over residues W807–N832. Basic residues predominate over residues N913 to K923.

It is found in the cell membrane. Functionally, potential calcium-dependent cell-adhesion protein. May be involved in the establishment and maintenance of specific neuronal connections in the brain. This chain is Protocadherin gamma-B5 (PCDHGB5), found in Pan troglodytes (Chimpanzee).